A 92-amino-acid chain; its full sequence is MARTVNCVYLNKEAEGLGFQLYPGDLGKRIFDNVSKEAWALWQSKQTMLINEKKLNMMNVEDRKFLEEQMVNFLFEGKDVEIEGYVPQKDDE.

This sequence belongs to the Fe(2+)-trafficking protein family.

Its function is as follows. Could be a mediator in iron transactions between iron acquisition and iron-requiring processes, such as synthesis and/or repair of Fe-S clusters in biosynthetic enzymes. The polypeptide is Probable Fe(2+)-trafficking protein (Shewanella pealeana (strain ATCC 700345 / ANG-SQ1)).